The chain runs to 360 residues: MTTTLQRRESANLWERFCNWVTSTDNRLYVGWFGVIMIPTLLAATICFVIAFIAAPPVDIDGIREPVSGSLLYGNNIITGAVVPSSNAIGLHFYPIWEAASLDEWLYNGGPYQLIIFHFLLGASCYMGRQWELSYRLGMRPWICVAYSAPLASAFAVFLIYPIGQGSFSDGMPLGISGTFNFMIVFQAEHNILMHPFHQLGVAGVFGGALFCAMHGSLVTSSLIRETTETESANYGYKFGQEEETYNIVAAHGYFGRLIFQYASFNNSRSLHFFLAAWPVVGVWFTALGISTMAFNLNGFNFNHSVIDAKGNVINTWADIINRANLGMEVMHERNAHNFPLDLASAESAPVAMIAPSING.

Over T2–G31 the chain is Cytoplasmic. The helical transmembrane segment at W32–I53 threads the bilayer. The Lumenal portion of the chain corresponds to A54–G110. A helical transmembrane segment spans residues P111–E132. H118 provides a ligand contact to chlorophyll a. Residues Y126 and Q130 each contribute to the pheophytin a site. At L133–W142 the chain is on the cytoplasmic side. A helical membrane pass occupies residues I143–I163. A pheophytin a-binding site is contributed by Y147. Topologically, residues G164 to N191 are lumenal. 2 residues coordinate [CaMn4O5] cluster: D170 and E189. A helical membrane pass occupies residues I192–S217. H198 provides a ligand contact to chlorophyll a. Residues H215 and S264–F265 each bind a quinone. H215 serves as a coordination point for Fe cation. The Cytoplasmic portion of the chain corresponds to L218–H272. H272 contacts Fe cation. Residues F273–F295 form a helical membrane-spanning segment. Residues N296–A344 are Lumenal-facing. [CaMn4O5] cluster contacts are provided by H332, E333, D342, and A344. The propeptide occupies S345–G360.

It belongs to the reaction center PufL/M/PsbA/D family. As to quaternary structure, PSII is composed of 1 copy each of membrane proteins PsbA, PsbB, PsbC, PsbD, PsbE, PsbF, PsbH, PsbI, PsbJ, PsbK, PsbL, PsbM, PsbT, PsbX, PsbY, PsbZ, Psb30/Ycf12, peripheral proteins PsbO, CyanoQ (PsbQ), PsbU, PsbV and a large number of cofactors. It forms dimeric complexes. Precursor protein interacts with Ycf48. Part of a photosystem II (PSII) assembly intermediate complex PSII-I; crystallized from a strain deleted of psbJ, it forms monomeric PSII before addition of the oxygen evolving complex. PSII-I includes 3 assembly factors not found in mature PSII (Psb27, Psb28 and Psb34). In PSII-I the C-terminus of D1 (this subunit) is already processed but not yet found at its final position. The D1/D2 heterodimer binds P680, chlorophylls that are the primary electron donor of PSII, and subsequent electron acceptors. It shares a non-heme iron and each subunit binds pheophytin, quinone, additional chlorophylls, carotenoids and lipids. D1 provides most of the ligands for the Mn4-Ca-O5 cluster of the oxygen-evolving complex (OEC). There is also a Cl(-1) ion associated with D1 and D2, which is required for oxygen evolution. PSII binds additional chlorophylls, carotenoids and specific lipids. serves as cofactor. C-terminally processed by CtpA; processing is essential to allow assembly of the oxygen-evolving complex and thus photosynthetic growth. Post-translationally, tyr-161 forms a radical intermediate that is referred to as redox-active TyrZ, YZ or Y-Z.

Its subcellular location is the cellular thylakoid membrane. The catalysed reaction is 2 a plastoquinone + 4 hnu + 2 H2O = 2 a plastoquinol + O2. Photosystem II (PSII) is a light-driven water:plastoquinone oxidoreductase that uses light energy to abstract electrons from H(2)O, generating O(2) and a proton gradient subsequently used for ATP formation. It consists of a core antenna complex that captures photons, and an electron transfer chain that converts photonic excitation into a charge separation. The D1/D2 (PsbA/PsbD) reaction center heterodimer binds P680, the primary electron donor of PSII as well as several subsequent electron acceptors. This Thermosynechococcus vestitus (strain NIES-2133 / IAM M-273 / BP-1) protein is Photosystem II protein D1 1.